A 459-amino-acid chain; its full sequence is tRNA modification GTPase MnmE (459 aa).

Residues arginine 20, glutamate 85, and arginine 124 each contribute to the (6S)-5-formyl-5,6,7,8-tetrahydrofolate site. Residues 221-380 (GISTVIIGRP…LEEAIQSLFF (160 aa)) enclose the TrmE-type G domain. Position 231 (asparagine 231) interacts with K(+). Residues 231–236 (NVGKSS), 250–256 (TDIPGTT), and 275–278 (DTAG) contribute to the GTP site. Residue serine 235 coordinates Mg(2+). K(+) is bound by residues threonine 250, isoleucine 252, and threonine 255. Threonine 256 contributes to the Mg(2+) binding site. Lysine 459 lines the (6S)-5-formyl-5,6,7,8-tetrahydrofolate pocket.

The protein belongs to the TRAFAC class TrmE-Era-EngA-EngB-Septin-like GTPase superfamily. TrmE GTPase family. Homodimer. Heterotetramer of two MnmE and two MnmG subunits. It depends on K(+) as a cofactor.

The protein resides in the cytoplasm. Its function is as follows. Exhibits a very high intrinsic GTPase hydrolysis rate. Involved in the addition of a carboxymethylaminomethyl (cmnm) group at the wobble position (U34) of certain tRNAs, forming tRNA-cmnm(5)s(2)U34. This Bacillus licheniformis (strain ATCC 14580 / DSM 13 / JCM 2505 / CCUG 7422 / NBRC 12200 / NCIMB 9375 / NCTC 10341 / NRRL NRS-1264 / Gibson 46) protein is tRNA modification GTPase MnmE.